A 267-amino-acid chain; its full sequence is Tryptophan synthase alpha chain (267 aa).

Active-site proton acceptor residues include Glu-49 and Asp-60.

It belongs to the TrpA family. As to quaternary structure, tetramer of two alpha and two beta chains.

The enzyme catalyses (1S,2R)-1-C-(indol-3-yl)glycerol 3-phosphate + L-serine = D-glyceraldehyde 3-phosphate + L-tryptophan + H2O. Its pathway is amino-acid biosynthesis; L-tryptophan biosynthesis; L-tryptophan from chorismate: step 5/5. In terms of biological role, the alpha subunit is responsible for the aldol cleavage of indoleglycerol phosphate to indole and glyceraldehyde 3-phosphate. This chain is Tryptophan synthase alpha chain, found in Geotalea uraniireducens (strain Rf4) (Geobacter uraniireducens).